The sequence spans 247 residues: NifU-like scaffold protein (247 aa).

The protein belongs to the NifU family. In terms of assembly, homodimer.

Its subcellular location is the plastid. The protein resides in the apicoplast. Its pathway is cofactor biosynthesis; iron-sulfur cluster biosynthesis. Binds and transfers [4Fe-4S] iron-sulfur clusters to target proteins. The sequence is that of NifU-like scaffold protein from Plasmodium falciparum (isolate 3D7).